Reading from the N-terminus, the 384-residue chain is Anhydro-N-acetylmuramic acid kinase (384 aa).

9–16 lines the ATP pocket; the sequence is GTSVDGID.

It belongs to the anhydro-N-acetylmuramic acid kinase family.

It carries out the reaction 1,6-anhydro-N-acetyl-beta-muramate + ATP + H2O = N-acetyl-D-muramate 6-phosphate + ADP + H(+). Its pathway is amino-sugar metabolism; 1,6-anhydro-N-acetylmuramate degradation. It functions in the pathway cell wall biogenesis; peptidoglycan recycling. Catalyzes the specific phosphorylation of 1,6-anhydro-N-acetylmuramic acid (anhMurNAc) with the simultaneous cleavage of the 1,6-anhydro ring, generating MurNAc-6-P. Is required for the utilization of anhMurNAc either imported from the medium or derived from its own cell wall murein, and thus plays a role in cell wall recycling. The polypeptide is Anhydro-N-acetylmuramic acid kinase (Rippkaea orientalis (strain PCC 8801 / RF-1) (Cyanothece sp. (strain PCC 8801))).